A 155-amino-acid chain; its full sequence is Transcriptional regulator MraZ (155 aa).

2 consecutive SpoVT-AbrB domains span residues 7 to 54 (TYEC…PMEE) and 83 to 126 (VKTV…DKDK).

It belongs to the MraZ family. Forms oligomers.

Its subcellular location is the cytoplasm. It localises to the nucleoid. The chain is Transcriptional regulator MraZ from Christiangramia forsetii (strain DSM 17595 / CGMCC 1.15422 / KT0803) (Gramella forsetii).